The following is a 316-amino-acid chain: Acetyl-coenzyme A carboxylase carboxyl transferase subunit alpha (316 aa).

The 255-residue stretch at 39-293 (KLEEKNAQLT…KKHLQANLTN (255 aa)) folds into the CoA carboxyltransferase C-terminal domain.

It belongs to the AccA family. Acetyl-CoA carboxylase is a heterohexamer composed of biotin carboxyl carrier protein (AccB), biotin carboxylase (AccC) and two subunits each of ACCase subunit alpha (AccA) and ACCase subunit beta (AccD).

It is found in the cytoplasm. The enzyme catalyses N(6)-carboxybiotinyl-L-lysyl-[protein] + acetyl-CoA = N(6)-biotinyl-L-lysyl-[protein] + malonyl-CoA. It participates in lipid metabolism; malonyl-CoA biosynthesis; malonyl-CoA from acetyl-CoA: step 1/1. In terms of biological role, component of the acetyl coenzyme A carboxylase (ACC) complex. First, biotin carboxylase catalyzes the carboxylation of biotin on its carrier protein (BCCP) and then the CO(2) group is transferred by the carboxyltransferase to acetyl-CoA to form malonyl-CoA. The chain is Acetyl-coenzyme A carboxylase carboxyl transferase subunit alpha from Coxiella burnetii (strain RSA 331 / Henzerling II).